Consider the following 200-residue polypeptide: COMM domain-containing protein 7 (200 aa).

A COMM domain is found at 133 to 200; that stretch reads QLIDMEWKFG…RVRTSMECFC (68 aa).

It belongs to the COMM domain-containing protein 7 family. In terms of assembly, component of the commander complex consisting of the CCC subcomplex and the retriever subcomplex. Component of the CCC (COMMD/CCDC22/CCDC93) subcomplex consisting of COMMD1, COMMD2, COMMD3, COMMD4, COMMD5, COMMD6, COMMD7, COMMD8, COMMD9, COMMD10, CCDC22 and CCDC93; within the complex forms a heterodimer with COMMD9. Interacts with RELA. Interacts with CCDC22, CCDC93, SCNN1B, CUL7. Widely expressed with highest expression in lung.

Its subcellular location is the cytoplasmic vesicle. In terms of biological role, scaffold protein in the commander complex that is essential for endosomal recycling of transmembrane cargos; the commander complex is composed of the CCC subcomplex and the retriever subcomplex. May modulate activity of cullin-RING E3 ubiquitin ligase (CRL) complexes. Associates with the NF-kappa-B complex and suppresses its transcriptional activity. The polypeptide is COMM domain-containing protein 7 (COMMD7) (Homo sapiens (Human)).